Here is a 382-residue protein sequence, read N- to C-terminus: Protein RecA (382 aa).

Residues 1–20 are disordered; that stretch reads MPADVKAAQSSAGDSRPGER. 79–86 contributes to the ATP binding site; the sequence is GPESSGKT. The segment covering 360–369 has biased composition (low complexity); it reads SAAAKPSAKT. The tract at residues 360 to 382 is disordered; the sequence is SAAAKPSAKTADTDKKLVADGAA. Positions 370-382 are enriched in basic and acidic residues; it reads ADTDKKLVADGAA.

This sequence belongs to the RecA family.

The protein resides in the cytoplasm. Its function is as follows. Can catalyze the hydrolysis of ATP in the presence of single-stranded DNA, the ATP-dependent uptake of single-stranded DNA by duplex DNA, and the ATP-dependent hybridization of homologous single-stranded DNAs. It interacts with LexA causing its activation and leading to its autocatalytic cleavage. The chain is Protein RecA from Synechococcus sp. (strain CC9311).